The following is an 80-amino-acid chain: Exodeoxyribonuclease 7 small subunit (80 aa).

Belongs to the XseB family. Heterooligomer composed of large and small subunits.

The protein localises to the cytoplasm. The catalysed reaction is Exonucleolytic cleavage in either 5'- to 3'- or 3'- to 5'-direction to yield nucleoside 5'-phosphates.. Functionally, bidirectionally degrades single-stranded DNA into large acid-insoluble oligonucleotides, which are then degraded further into small acid-soluble oligonucleotides. This Pseudoalteromonas translucida (strain TAC 125) protein is Exodeoxyribonuclease 7 small subunit.